Reading from the N-terminus, the 431-residue chain is Phosphate regulon sensor protein PhoR (431 aa).

At 1-9 (MLERLSWKR) the chain is on the cytoplasmic side. The chain crosses the membrane as a helical span at residues 10–28 (LVLELLLCCLPAFILGAFF). Over 29 to 32 (GYLP) the chain is Periplasmic. A helical membrane pass occupies residues 33-51 (WFLLASVTGLLIWHFWNLL). The Cytoplasmic portion of the chain corresponds to 52–431 (RLSWWLWVDR…PERLIAKNSD (380 aa)). The region spanning 96 to 172 (LIKRFRSGAE…RPLNLVLNTG (77 aa)) is the PAS domain. Residues 210-425 (NVSHELRTPL…RFSFVIPERL (216 aa)) form the Histidine kinase domain. H213 carries the phosphohistidine; by autocatalysis modification.

Its subcellular location is the cell inner membrane. It carries out the reaction ATP + protein L-histidine = ADP + protein N-phospho-L-histidine.. Member of the two-component regulatory system PhoR/PhoB involved in the phosphate regulon genes expression. PhoR may function as a membrane-associated protein kinase that phosphorylates PhoB in response to environmental signals. This chain is Phosphate regulon sensor protein PhoR (phoR), found in Escherichia coli (strain K12).